The sequence spans 147 residues: MESLWNQLDQFTDAPTKQMLQALVKRKQKFENYAAQCRRWRWASLICLGLLCVMIMIKSPEPQLILQEILSHTFYLFWMLATAFAYCTSYYFKKKEEKSETDFHKLRCEIIQKSTDLWPQPDKWKARESVFHMMKHKYDINLYFESK.

Transmembrane regions (helical) follow at residues 42 to 62 (WASL…SPEP) and 64 to 84 (LILQ…ATAF).

The protein resides in the cell membrane. This is an uncharacterized protein from Bacillus subtilis (strain 168).